Reading from the N-terminus, the 143-residue chain is Transcriptional regulator MraZ (143 aa).

2 consecutive SpoVT-AbrB domains span residues E5 to E47 and A76 to K119.

This sequence belongs to the MraZ family. As to quaternary structure, forms oligomers.

The protein localises to the cytoplasm. The protein resides in the nucleoid. In Natranaerobius thermophilus (strain ATCC BAA-1301 / DSM 18059 / JW/NM-WN-LF), this protein is Transcriptional regulator MraZ.